The sequence spans 130 residues: MLLALLPVLGIHFVLRDAQAQSVTQPDARVTVSEGASLQLRCKYSYSATPYLFWYVQYPRQGLQLLLKYYSGDPVVQGVNGFEAEFSKSNSSFHLRKASVHWSDSAVYFCAVSGFASALTFGSGTKVIVL.

The signal sequence occupies residues 1 to 20 (MLLALLPVLGIHFVLRDAQA). The tract at residues 21–114 (QSVTQPDARV…SAVYFCAVSG (94 aa)) is v segment. A glycan (N-linked (GlcNAc...) asparagine) is linked at asparagine 90. The j segment stretch occupies residues 115-130 (FASALTFGSGTKVIVL).

This is T-cell receptor alpha chain V region PHDS58 from Mus musculus (Mouse).